A 382-amino-acid polypeptide reads, in one-letter code: Dual-specificity RNA methyltransferase RlmN (382 aa).

Catalysis depends on Glu-96, which acts as the Proton acceptor. The Radical SAM core domain maps to 102-342 (QGGRGTLCVS…VRTTRGEDID (241 aa)). A disulfide bridge links Cys-109 with Cys-345. Cys-116, Cys-120, and Cys-123 together coordinate [4Fe-4S] cluster. Residues 170 to 171 (GE), Ser-202, 224 to 226 (SLH), and Asn-302 each bind S-adenosyl-L-methionine. The active-site S-methylcysteine intermediate is the Cys-345.

It belongs to the radical SAM superfamily. RlmN family. The cofactor is [4Fe-4S] cluster.

It localises to the cytoplasm. The catalysed reaction is adenosine(2503) in 23S rRNA + 2 reduced [2Fe-2S]-[ferredoxin] + 2 S-adenosyl-L-methionine = 2-methyladenosine(2503) in 23S rRNA + 5'-deoxyadenosine + L-methionine + 2 oxidized [2Fe-2S]-[ferredoxin] + S-adenosyl-L-homocysteine. It carries out the reaction adenosine(37) in tRNA + 2 reduced [2Fe-2S]-[ferredoxin] + 2 S-adenosyl-L-methionine = 2-methyladenosine(37) in tRNA + 5'-deoxyadenosine + L-methionine + 2 oxidized [2Fe-2S]-[ferredoxin] + S-adenosyl-L-homocysteine. Its function is as follows. Specifically methylates position 2 of adenine 2503 in 23S rRNA and position 2 of adenine 37 in tRNAs. m2A2503 modification seems to play a crucial role in the proofreading step occurring at the peptidyl transferase center and thus would serve to optimize ribosomal fidelity. This Stutzerimonas stutzeri (strain A1501) (Pseudomonas stutzeri) protein is Dual-specificity RNA methyltransferase RlmN.